We begin with the raw amino-acid sequence, 314 residues long: Altered inheritance of mitochondria protein 6 homolog ARB_06966 (314 aa).

The signal sequence occupies residues 1–21 (MKSSILASAAILAASLEPVAA). 2 N-linked (GlcNAc...) asparagine glycosylation sites follow: asparagine 91 and asparagine 184.

It belongs to the AIM6 family.

The protein resides in the secreted. This Arthroderma benhamiae (strain ATCC MYA-4681 / CBS 112371) (Trichophyton mentagrophytes) protein is Altered inheritance of mitochondria protein 6 homolog ARB_06966.